We begin with the raw amino-acid sequence, 241 residues long: Orotidine 5'-phosphate decarboxylase (241 aa).

Substrate contacts are provided by residues D15, K37, 64–73, T126, R187, Q196, G216, and R217; that span reads DLKYHDIPNT. K66 acts as the Proton donor in catalysis.

This sequence belongs to the OMP decarboxylase family. Type 1 subfamily. As to quaternary structure, homodimer.

The enzyme catalyses orotidine 5'-phosphate + H(+) = UMP + CO2. The protein operates within pyrimidine metabolism; UMP biosynthesis via de novo pathway; UMP from orotate: step 2/2. Its function is as follows. Catalyzes the decarboxylation of orotidine 5'-monophosphate (OMP) to uridine 5'-monophosphate (UMP). This is Orotidine 5'-phosphate decarboxylase from Trichlorobacter lovleyi (strain ATCC BAA-1151 / DSM 17278 / SZ) (Geobacter lovleyi).